The following is a 218-amino-acid chain: Small ribosomal subunit protein uS3 (218 aa).

Residues 38–106 enclose the KH type-2 domain; sequence IREYINKRLQ…REHINIVEIK (69 aa).

Belongs to the universal ribosomal protein uS3 family. Part of the 30S ribosomal subunit. Forms a tight complex with proteins S10 and S14.

Binds the lower part of the 30S subunit head. Binds mRNA in the 70S ribosome, positioning it for translation. The chain is Small ribosomal subunit protein uS3 from Geobacillus stearothermophilus (Bacillus stearothermophilus).